The following is a 133-amino-acid chain: Alpha-amylase inhibitor/endochitinase (133 aa).

E30 (proton donor) is an active-site residue.

This sequence belongs to the glycosyl hydrolase 19 family. Chitinase class I subfamily.

It carries out the reaction Random endo-hydrolysis of N-acetyl-beta-D-glucosaminide (1-&gt;4)-beta-linkages in chitin and chitodextrins.. Functionally, this protein functions both as an alpha-amylase inhibitor and as a chitinase. The polypeptide is Alpha-amylase inhibitor/endochitinase (Coix lacryma-jobi (Job's tears)).